We begin with the raw amino-acid sequence, 41 residues long: Large ribosomal subunit protein bL36 (41 aa).

Belongs to the bacterial ribosomal protein bL36 family.

The chain is Large ribosomal subunit protein bL36 from Sinorhizobium fredii (strain NBRC 101917 / NGR234).